A 407-amino-acid chain; its full sequence is uncharacterized protein (407 aa).

12 consecutive transmembrane segments (helical) span residues isoleucine 22–valine 42, leucine 51–alanine 71, alanine 101–valine 121, valine 126–valine 146, valine 154–valine 174, alanine 179–leucine 199, glycine 227–tyrosine 247, leucine 258–isoleucine 278, valine 286–valine 306, valine 309–glycine 329, alanine 347–alanine 367, and alanine 369–leucine 389.

The protein belongs to the major facilitator superfamily. YhhS family.

It is found in the cell inner membrane. This is an uncharacterized protein from Burkholderia pseudomallei (strain 1106a).